We begin with the raw amino-acid sequence, 594 residues long: MPIQILPPILANQIAAGEVVERPASVIKELVENSLDAGANRIDVELEKGGCQLIRVRDNGGGICGTELALALARHATSKVATLDDLEHIASLGFRGEALASISSVSRLTLTSRTAGQHEAWQAYAEGREMAVTVKPAAHPVGTTVEVLDLFFNTPARRRFLRSEKTEFAHIDELLRRLALSRFDVAINLKHNGKLLRQYRPAQTESQQEQRVVQACGAEFMQAALRIDSEHLGLHLYGWLAPQPLTAINEVQYCYVNGRMIRDKLLNHAIRQAYSECTGTSFQPAYILYLELDPHQVDVNVHPSKHEVRFHESRQVHDFIVQVIRQALQTAYSENAPDAVFSGIEDAAPDYPVSPLKNRATGQHQYSAPTGGYSSPSGSQLRSYGQLLTSELPSIPVSREAGSVAAPDNSDWPVLRLIQQRYLLSAQDDTLYLSDLVAIQSLQWLTQCNASFNEGLIAQPLLIPQRLDIARPHEWLAEYGIWLQKLGLRYNTHKNKQIIIQAVPALLRQTDMASTIPAMLSLLERYPVALSHQEWHSFIATWLKLPGLIPHHYSMDSARSLWLWLQQNVADWQNNTQLMRSVDLTNILEVFSRD.

The protein belongs to the DNA mismatch repair MutL/HexB family.

In terms of biological role, this protein is involved in the repair of mismatches in DNA. It is required for dam-dependent methyl-directed DNA mismatch repair. May act as a 'molecular matchmaker', a protein that promotes the formation of a stable complex between two or more DNA-binding proteins in an ATP-dependent manner without itself being part of a final effector complex. This chain is DNA mismatch repair protein MutL, found in Tolumonas auensis (strain DSM 9187 / NBRC 110442 / TA 4).